Reading from the N-terminus, the 113-residue chain is uncharacterized protein (113 aa).

Positions 1–22 are cleaved as a signal peptide; sequence MCRFPTFLLIAIAITMLPTILS. The N-linked (GlcNAc...) asparagine glycan is linked to N47.

It is found in the secreted. This is an uncharacterized protein from Caenorhabditis elegans.